A 901-amino-acid chain; its full sequence is Protein translocase subunit SecA (901 aa).

ATP is bound by residues Gln-87, 105-109, and Asp-512; that span reads GEGKT. The interval 839-901 is disordered; it reads QMEEQRRQES…KYKQCHGRLA (63 aa). The span at 841-850 shows a compositional bias: basic and acidic residues; it reads EEQRRQESER. Positions 885, 887, 896, and 897 each coordinate Zn(2+). The segment covering 891–901 has biased composition (basic residues); the sequence is KKYKQCHGRLA.

This sequence belongs to the SecA family. In terms of assembly, monomer and homodimer. Part of the essential Sec protein translocation apparatus which comprises SecA, SecYEG and auxiliary proteins SecDF-YajC and YidC. Requires Zn(2+) as cofactor.

Its subcellular location is the cell inner membrane. It localises to the cytoplasm. It carries out the reaction ATP + H2O + cellular proteinSide 1 = ADP + phosphate + cellular proteinSide 2.. In terms of biological role, part of the Sec protein translocase complex. Interacts with the SecYEG preprotein conducting channel. Has a central role in coupling the hydrolysis of ATP to the transfer of proteins into and across the cell membrane, serving both as a receptor for the preprotein-SecB complex and as an ATP-driven molecular motor driving the stepwise translocation of polypeptide chains across the membrane. The protein is Protein translocase subunit SecA of Erwinia tasmaniensis (strain DSM 17950 / CFBP 7177 / CIP 109463 / NCPPB 4357 / Et1/99).